We begin with the raw amino-acid sequence, 24 residues long: Frenatin-4 (24 aa).

Expressed by the skin glands.

It is found in the secreted. Functionally, very weak antimicrobial peptide since it does not show activity below 100 ug/ml against Bacillus cereus, Escherichia coli, Leuconostoc mesenteroides, Micrococcus luteus, Pastewella haemolytica, Staphylococcus aureus, Streptococcus faecalis and Streptococcus uberis. The chain is Frenatin-4 from Nyctimystes infrafrenatus (White-lipped tree frog).